A 302-amino-acid polypeptide reads, in one-letter code: GLABROUS1 enhancer-binding protein (302 aa).

2 disordered regions span residues 1 to 55 and 158 to 229; these read MVTP…MKKK and GQGD…NDDD. Serine 27 is subject to Phosphoserine. A compositionally biased stretch (basic and acidic residues) spans 180–195; the sequence is RTNESGEEMLKEHEEE. A compositionally biased stretch (polar residues) spans 208-217; sequence AKTTENGTSS. The segment at 270-291 is non-canonical leucine-zipper; that stretch reads LSDEWKALCVEETRFNIKKLRF.

Belongs to the GeBP family. In terms of assembly, homo- and heterodimers. Interacts with GPL1, GPL2 and GPL3. Interacts with KIN10, KIN11 and FLZ4. Interacts with KIN10 and KIN11 via its N-terminal part. Interacts with GPL1 and GPL3 via its C-terminal part. Expressed in the apical meristem and young leaf primordia. Not detected in emerging or mature leaves. Detected in the vascular tissues of cotyledons and leaves, in hydathodes and at the base of flowers and siliques, but not in roots.

It localises to the nucleus. Its subcellular location is the nucleolus. DNA-binding protein, which specifically recognizes the GL1 enhancer sequence. May be involved in leaf initiation. May play redundant roles with GPL1 and GPL2 in cytokinin responses by regulating the transcript levels of type-A ARR response genes. Involved in stress responses. Plays a repressive role in cell expansion by counteracting the positive role of CPR5 in this process, but does not regulate cell proliferation or endoreduplication. May play a role in plant defense. The sequence is that of GLABROUS1 enhancer-binding protein from Arabidopsis thaliana (Mouse-ear cress).